A 313-amino-acid chain; its full sequence is tRNA dimethylallyltransferase (313 aa).

20–27 (GPTGTGKS) serves as a coordination point for ATP. 22 to 27 (TGTGKS) contacts substrate.

Belongs to the IPP transferase family. Monomer. Requires Mg(2+) as cofactor.

It catalyses the reaction adenosine(37) in tRNA + dimethylallyl diphosphate = N(6)-dimethylallyladenosine(37) in tRNA + diphosphate. In terms of biological role, catalyzes the transfer of a dimethylallyl group onto the adenine at position 37 in tRNAs that read codons beginning with uridine, leading to the formation of N6-(dimethylallyl)adenosine (i(6)A). The sequence is that of tRNA dimethylallyltransferase from Kocuria rhizophila (strain ATCC 9341 / DSM 348 / NBRC 103217 / DC2201).